We begin with the raw amino-acid sequence, 579 residues long: Deleted in azoospermia protein 4 (579 aa).

Over residues 1–10 (MSAANPETPN) the composition is skewed to polar residues. Residues 1 to 27 (MSAANPETPNSTISREASTQSSSAAAS) are disordered. The span at 11–27 (STISREASTQSSSAAAS) shows a compositional bias: low complexity. The RRM 1 domain maps to 40 to 115 (NTVFVGGIDA…KKLKLGPAIR (76 aa)). Residues 163 to 175 (QHVQSAANPETPN) are compositionally biased toward polar residues. The disordered stretch occupies residues 163–192 (QHVQSAANPETPNSTISREASTQSSSAAAS). Low complexity predominate over residues 176-192 (STISREASTQSSSAAAS). Residues 205-280 (NTVFVGGIDA…KKLKLGPAIR (76 aa)) enclose the RRM 2 domain. DAZ domains are found at residues 332-355 (AYSA…YNYQ), 356-379 (EYPT…YNYQ), 380-403 (PFPA…YNYQ), 404-427 (AFPA…YNYQ), 428-451 (PFPA…YNYQ), 452-475 (AFPA…YNYQ), 476-499 (AFPA…YNYQ), 500-523 (AFPA…YNYQ), and 524-547 (AFPA…YNYQ).

The protein belongs to the RRM DAZ family. As to quaternary structure, forms a heterodimer with BOLL and DAZL. Interacts with PUM2, DAZAP1, DAZAP2, DZIP1 and DZIP3. As to expression, testis-specific. Expression restricted to premeiotic germ cells, particularly in spermatogonia (at protein level).

It localises to the cytoplasm. It is found in the nucleus. RNA-binding protein that plays an essential role in spermatogenesis. May act by binding to the 3'-UTR of mRNAs and regulating their translation. This Homo sapiens (Human) protein is Deleted in azoospermia protein 4 (DAZ4).